The chain runs to 314 residues: Acetaldehyde dehydrogenase (314 aa).

Residue 15-18 coordinates NAD(+); sequence SGNI. C133 functions as the Acyl-thioester intermediate in the catalytic mechanism. NAD(+) is bound by residues 164–172 and N292; that span reads SAGPGTRAN.

This sequence belongs to the acetaldehyde dehydrogenase family.

It carries out the reaction acetaldehyde + NAD(+) + CoA = acetyl-CoA + NADH + H(+). The polypeptide is Acetaldehyde dehydrogenase (Paraburkholderia phytofirmans (strain DSM 17436 / LMG 22146 / PsJN) (Burkholderia phytofirmans)).